Consider the following 733-residue polypeptide: Catalase-peroxidase 2 (733 aa).

Positions 1–35 (MAEAETHPPIGESQTEPAESGCPMRIKPPVEGGSN) are disordered. Positions 106-234 (WHAAGTYRVE…PXXPHMGLIY (129 aa)) form a cross-link, tryptophyl-tyrosyl-methioninium (Trp-Tyr) (with M-260). His107 acts as the Proton acceptor in catalysis. Positions 234–260 (YVNPEGPEGNPDYLAAAIDIRETFGRM) form a cross-link, tryptophyl-tyrosyl-methioninium (Tyr-Met) (with W-106). His275 provides a ligand contact to heme.

It belongs to the peroxidase family. Peroxidase/catalase subfamily. As to quaternary structure, homodimer or homotetramer. Requires heme b as cofactor. Formation of the three residue Trp-Tyr-Met cross-link is important for the catalase, but not the peroxidase activity of the enzyme.

It catalyses the reaction H2O2 + AH2 = A + 2 H2O. It carries out the reaction 2 H2O2 = O2 + 2 H2O. In terms of biological role, bifunctional enzyme with both catalase and broad-spectrum peroxidase activity. May play a role in the intracellular survival of mycobacteria. The polypeptide is Catalase-peroxidase 2 (Mycolicibacterium fortuitum (Mycobacterium fortuitum)).